Reading from the N-terminus, the 247-residue chain is Probable transcriptional regulatory protein lpg1286 (247 aa).

It belongs to the TACO1 family.

The protein resides in the cytoplasm. The chain is Probable transcriptional regulatory protein lpg1286 from Legionella pneumophila subsp. pneumophila (strain Philadelphia 1 / ATCC 33152 / DSM 7513).